The chain runs to 554 residues: CTP synthase (554 aa).

The tract at residues M1–I270 is amidoligase domain. S13 provides a ligand contact to CTP. S13 contributes to the UTP binding site. Residues S14–I19 and D71 contribute to the ATP site. Positions 71 and 144 each coordinate Mg(2+). Residues D151 to E153, K191 to Q196, and K227 contribute to the CTP site. UTP is bound by residues K191–Q196 and K227. A Glutamine amidotransferase type-1 domain is found at T295–R547. Residue G356 coordinates L-glutamine. Catalysis depends on C383, which acts as the Nucleophile; for glutamine hydrolysis. L-glutamine contacts are provided by residues L384 to Q387, E407, and R473. Active-site residues include H520 and E522.

Belongs to the CTP synthase family. As to quaternary structure, homotetramer.

The catalysed reaction is UTP + L-glutamine + ATP + H2O = CTP + L-glutamate + ADP + phosphate + 2 H(+). It catalyses the reaction L-glutamine + H2O = L-glutamate + NH4(+). The enzyme catalyses UTP + NH4(+) + ATP = CTP + ADP + phosphate + 2 H(+). It participates in pyrimidine metabolism; CTP biosynthesis via de novo pathway; CTP from UDP: step 2/2. With respect to regulation, allosterically activated by GTP, when glutamine is the substrate; GTP has no effect on the reaction when ammonia is the substrate. The allosteric effector GTP functions by stabilizing the protein conformation that binds the tetrahedral intermediate(s) formed during glutamine hydrolysis. Inhibited by the product CTP, via allosteric rather than competitive inhibition. Catalyzes the ATP-dependent amination of UTP to CTP with either L-glutamine or ammonia as the source of nitrogen. Regulates intracellular CTP levels through interactions with the four ribonucleotide triphosphates. In Ralstonia nicotianae (strain ATCC BAA-1114 / GMI1000) (Ralstonia solanacearum), this protein is CTP synthase.